The chain runs to 290 residues: 4-hydroxy-tetrahydrodipicolinate synthase (290 aa).

T44 provides a ligand contact to pyruvate. Catalysis depends on Y132, which acts as the Proton donor/acceptor. K160 acts as the Schiff-base intermediate with substrate in catalysis. Pyruvate is bound at residue I202.

Belongs to the DapA family. In terms of assembly, homotetramer; dimer of dimers.

The protein localises to the cytoplasm. It carries out the reaction L-aspartate 4-semialdehyde + pyruvate = (2S,4S)-4-hydroxy-2,3,4,5-tetrahydrodipicolinate + H2O + H(+). Its pathway is amino-acid biosynthesis; L-lysine biosynthesis via DAP pathway; (S)-tetrahydrodipicolinate from L-aspartate: step 3/4. Catalyzes the condensation of (S)-aspartate-beta-semialdehyde [(S)-ASA] and pyruvate to 4-hydroxy-tetrahydrodipicolinate (HTPA). The polypeptide is 4-hydroxy-tetrahydrodipicolinate synthase (Legionella pneumophila (strain Corby)).